Here is a 682-residue protein sequence, read N- to C-terminus: MADMKTGIFAKNVQKRLNRAQEKVLQKLGKADETKDEQFEEYVQNFKRQEAEGSRLQRELRAYLAAIKGMQDASKKLTESLHEVYEPDWYGREDVKMIGEKCDELWEDFHQKLVDGSLLTLDTYLGQFPDIKTRIAKRSRKLVDYDSARHHLEALQSSKRKDEGRITKAEEEFQKAQKVFEEFNTDLQEELPSLWSRRVGFYVNTFKNVSSLEAKFHKEIALLCHKLYEVMTKLGDQHADKAFTIQGAPSDSGPLRIAKTPSPPEEVSPLPSPTASPNHMLAPASPAPARPKSPTQLRKGPPVPPLPKLTPTKELQQENIINLFDDNFVPEINVTTPSQNEIPETKKVESLLDLDFDPFKPEVVSTGVTHSPMSQTLPWDLWTTTSELVQPASSTAFNGFAQDTTAFAVQSNENVTETLTEAEEAPLGELKVEETPTAAVVEKEAILAEPDEPTEQAAESIEAGDKETTGIAEKESEVVSAAGGAVAVEDSVVVAAGAGEGAVRTEQEAAAEGDKPQGEEKDVDVSQEKVSSIPSVVIEPASNNEGEGEEHHVIMNESKDAAAEMGTQGTDSETSQIGSEQKATEEIQTTPSQDQPASAGDTASDMPPGFLFKVEVLHDFEAANSDELNLKRGDIVLVIPSETTADQEAGWLTGIKESEWLQYRDANSYKGLFPENFTRHLE.

Coiled-coil stretches lie at residues 10-84 and 144-191; these read AKNV…LHEV and DYDS…QEEL. The BAR domain maps to 24-240; it reads VLQKLGKADE…MTKLGDQHAD (217 aa). 4 disordered regions span residues 244–310, 446–470, 501–530, and 561–606; these read TIQG…PKLT, ILAE…ETTG, GAVR…QEKV, and AAAE…ASDM. A compositionally biased stretch (pro residues) spans 261-274; that stretch reads PSPPEEVSPLPSPT. Positions 503-527 are enriched in basic and acidic residues; it reads VRTEQEAAAEGDKPQGEEKDVDVSQ. Residues 567–596 show a composition bias toward polar residues; sequence TQGTDSETSQIGSEQKATEEIQTTPSQDQP. Residues 609-682 form the SH3 domain; sequence GFLFKVEVLH…FPENFTRHLE (74 aa).

Heterodimer with BIN1. Binds SH3GLB1. In terms of tissue distribution, is abundant in the forebrain and cerebellum. It is also found in the adrenal gland, anterior and posterior pituitary.

Its subcellular location is the cytoplasmic vesicle. The protein resides in the secretory vesicle. It is found in the synaptic vesicle membrane. The protein localises to the cytoplasm. It localises to the cytoskeleton. May participate in mechanisms of regulated exocytosis in synapses and certain endocrine cell types. May control the properties of the membrane associated cytoskeleton. The protein is Amphiphysin (AMPH) of Gallus gallus (Chicken).